We begin with the raw amino-acid sequence, 1055 residues long: TNF receptor-associated factor homolog 1a (1055 aa).

Positions 1 to 56 are disordered; it reads MSESTNEDSGAGRSSLEENSNGQRSQSEEAIAEWRSSEQVENGTPSTSPPYWDIDD. Positions 37 to 46 are enriched in polar residues; the sequence is SEQVENGTPS. The MATH domain occupies 68–191; sequence FGKNTWTIEK…SGCLTIKAQV (124 aa). 4 disordered regions span residues 352-380, 431-590, 603-772, and 820-845; these read PKKE…VERD, AESE…NGSY, FSNG…APII, and VGSS…SHPS. The segment covering 433-446 has biased composition (basic and acidic residues); that stretch reads SEQKGKRGASEKEK. A coiled-coil region spans residues 441–496; it reads ASEKEKKSKKKQAKQKKNKNKGKEMRKEDKVRTQTEEREIEKEECVRAIAESSAEK. The segment covering 447-460 has biased composition (basic residues); sequence KSKKKQAKQKKNKN. The span at 461 to 486 shows a compositional bias: basic and acidic residues; sequence KGKEMRKEDKVRTQTEEREIEKEECV. The segment covering 502-513 has biased composition (low complexity); that stretch reads DVSDVSDSVDSS. Residues 524 to 537 are compositionally biased toward basic and acidic residues; sequence RESSPVHWEMDASE. Residues 569-586 show a composition bias toward polar residues; sequence MDDSSSTCSNDSIQSGVA. Positions 657-668 are enriched in basic and acidic residues; sequence QKPESPKERSPV. Composition is skewed to polar residues over residues 723-740 and 823-845; these read KSPS…QLQT and SGFT…SHPS.

As to quaternary structure, interacts with AHK3. Interacts with ATG6, SINAT1, SINAT2, SINAT5 and SINAT6.

It is found in the cytoplasm. Functionally, functions redundantly with TRAF1B in the regulation of plant immune response. Contributes to the turnover of the nucleotide-binding domain and leucine-rich repeat-containing (NB-LRR) immune receptors SNC1 and RPS2. May associate with an E3 ubiquitin-protein ligase complex, which modulates ubiquitination and subsequent degradation of NB-LRR immune sensors to maintain their homeostasis. Functions redundantly with TRAF1B in the regulation of autophagosome formation. Required for SINAT1- and SINAT2-mediated ubiquitination and destabilization of ATG6. Functions as a molecular adapter that helps to regulate autophagy by modulating ATG6 stability. The polypeptide is TNF receptor-associated factor homolog 1a (Arabidopsis thaliana (Mouse-ear cress)).